The following is a 310-amino-acid chain: MSEFLTVAFYKFVELQDYAELKAPLLACCQDNDVQGTILLATEGINGAIAGLPHNIHTVLDFLCGDPRFADLAPKESWSEKRPFYRMKVRLKKEIIKMGVPDIDPTQTVGEYVKPEDWNQLLADPDVVVIDVRNDYEVAIGTFKGAINPNTKSFSELPEWLQEQAELQKKPKVAMFCTGGIRCEKSTALLRHEGFEDVFHLQGGILSYLEKVPEDESLWQGDCFVFDERVAVGHGLKPGRYQLCRACRTPISPEDMKSEHYVPGQSCPHCYGTKTEEQQQRFAERQRQIELAKQRNQVHIGAKYSRHQPG.

A Rhodanese domain is found at 123 to 217 (ADPDVVVIDV…YLEKVPEDES (95 aa)). C177 serves as the catalytic Cysteine persulfide intermediate.

The protein belongs to the TrhO family.

The catalysed reaction is uridine(34) in tRNA + AH2 + O2 = 5-hydroxyuridine(34) in tRNA + A + H2O. In terms of biological role, catalyzes oxygen-dependent 5-hydroxyuridine (ho5U) modification at position 34 in tRNAs. The protein is tRNA uridine(34) hydroxylase of Acaryochloris marina (strain MBIC 11017).